The chain runs to 952 residues: Ubiquitin carboxyl-terminal hydrolase CYLD (952 aa).

The interval 106-589 (CEERLSLFRN…LEIMIGKKKG (484 aa)) is interaction with TRIP. CAP-Gly domains lie at 153–198 (LAER…VFVA) and 253–286 (DVLPGKESLGYFVGVDMDNPIGNWDGRFDGVQLC). The segment at 311 to 350 (RRPPKLAFMSRGVGDKGSSSHNKPKVTGSTSDPGSRNRSE) is disordered. Residues 327 to 346 (GSSSHNKPKVTGSTSDPGSR) show a composition bias toward polar residues. S383 is modified (phosphoserine). Residues 386 to 409 (EMSSDFGHSSPPPQPPSMNSLSSE) are disordered. The segment at 390–465 (DFGHSSPPPQ…LPISSGNAHG (76 aa)) is interaction with TRAF2. S414 and S418 each carry phosphoserine. Residues 466–680 (LEVGSLAEVK…FTSEEKDPEE (215 aa)) form an interaction with IKBKG/NEMO region. The CAP-Gly 3 domain occupies 488-531 (GQPPGLSDVLAGLELEDECAGCTDGTFRGTRYFTCALKKALFVK). The region spanning 588 to 946 (KGIQGHYNSC…DAYMCMYQSP (359 aa)) is the USP domain. The active-site Nucleophile is C597. The segment at 777–829 (LEDTPRQCRICGGLAMYECRECYDDPDISAGKIKQFCKTCSTQVHLHPRRLNH) is B-box. Zn(2+) contacts are provided by C784, C787, C795, C798, C813, C816, H821, and H829. The active-site Proton acceptor is H867.

Belongs to the peptidase C19 family. Interacts (via CAP-Gly domain) with IKBKG/NEMO (via proline-rich C-terminal region). Interacts with TRAF2 and TRIP. Interacts with PLK1, DVL1, DVL3, MAVS, TBK1, IKKE and RIGI. Interacts (via CAP-Gly domain) with microtubules. Interacts with HDAC6 and BCL3. Interacts with MAP3K7. Identified in a complex with TRAF6 and SQSTM1. Interacts with OPTN and SQSTM1. Interacts with CEP350. Interacts with RNF31; the interaction is indirect and is mediated via SPATA2. Interacts with SPATA2 (via the PUB domain); the interaction is direct and recruits CYLD to the LUBAC complex, thereby regulating TNF-alpha-induced necroptosis. Phosphorylated on several serine residues by IKKA and/or IKKB in response to immune stimuli. Phosphorylation requires IKBKG. Phosphorylation abolishes TRAF2 deubiquitination, interferes with the activation of Jun kinases, and strongly reduces CD40-dependent gene activation by NF-kappa-B. Post-translationally, ubiquitinated. Polyubiquitinated in hepatocytes treated with palmitic acid. Ubiquitination is mediated by E3 ligase TRIM47 and leads to proteasomal degradation.

It is found in the cytoplasm. Its subcellular location is the perinuclear region. It localises to the cytoskeleton. The protein resides in the cell membrane. The protein localises to the microtubule organizing center. It is found in the centrosome. Its subcellular location is the spindle. It localises to the cilium basal body. It catalyses the reaction Thiol-dependent hydrolysis of ester, thioester, amide, peptide and isopeptide bonds formed by the C-terminal Gly of ubiquitin (a 76-residue protein attached to proteins as an intracellular targeting signal).. In terms of biological role, deubiquitinase that specifically cleaves 'Lys-63'- and linear 'Met-1'-linked polyubiquitin chains and is involved in NF-kappa-B activation and TNF-alpha-induced necroptosis. Negatively regulates NF-kappa-B activation by deubiquitinating upstream signaling factors. Contributes to the regulation of cell survival, proliferation and differentiation via its effects on NF-kappa-B activation. Negative regulator of Wnt signaling. Inhibits HDAC6 and thereby promotes acetylation of alpha-tubulin and stabilization of microtubules. Plays a role in the regulation of microtubule dynamics, and thereby contributes to the regulation of cell proliferation, cell polarization, cell migration, and angiogenesis. Required for normal cell cycle progress and normal cytokinesis. Inhibits nuclear translocation of NF-kappa-B. Plays a role in the regulation of inflammation and the innate immune response, via its effects on NF-kappa-B activation. Dispensable for the maturation of intrathymic natural killer cells, but required for the continued survival of immature natural killer cells. Negatively regulates TNFRSF11A signaling and osteoclastogenesis. Involved in the regulation of ciliogenesis, allowing ciliary basal bodies to migrate and dock to the plasma membrane; this process does not depend on NF-kappa-B activation. Ability to remove linear ('Met-1'-linked) polyubiquitin chains regulates innate immunity and TNF-alpha-induced necroptosis: recruited to the LUBAC complex via interaction with SPATA2 and restricts linear polyubiquitin formation on target proteins. Regulates innate immunity by restricting linear polyubiquitin formation on RIPK2 in response to NOD2 stimulation. Involved in TNF-alpha-induced necroptosis by removing linear ('Met-1'-linked) polyubiquitin chains from RIPK1, thereby regulating the kinase activity of RIPK1. Negatively regulates intestinal inflammation by removing 'Lys-63' linked polyubiquitin chain of NLRP6, thereby reducing the interaction between NLRP6 and PYCARD/ASC and formation of the NLRP6 inflammasome. Does not catalyze deubiquitination of heterotypic 'Lys-63'-/'Lys-48'-linked branched ubiquitin chains. Removes 'Lys-63' linked polyubiquitin chain of MAP3K7, which inhibits phosphorylation and blocks downstream activation of the JNK-p38 kinase cascades. Also removes 'Lys-63'-linked polyubiquitin chains of MAP3K1 and MA3P3K3, which inhibit their interaction with MAP2K1 and MAP2K2. The sequence is that of Ubiquitin carboxyl-terminal hydrolase CYLD (Cyld) from Mus musculus (Mouse).